The primary structure comprises 864 residues: Leucine--tRNA ligase (864 aa).

The 'HIGH' region signature appears at 42–52; it reads PYPSGKLHMGH. The 'KMSKS' region signature appears at 624 to 628; that stretch reads KMSKS. Position 627 (K627) interacts with ATP.

Belongs to the class-I aminoacyl-tRNA synthetase family.

It localises to the cytoplasm. It catalyses the reaction tRNA(Leu) + L-leucine + ATP = L-leucyl-tRNA(Leu) + AMP + diphosphate. This Paraburkholderia phymatum (strain DSM 17167 / CIP 108236 / LMG 21445 / STM815) (Burkholderia phymatum) protein is Leucine--tRNA ligase.